Consider the following 23-residue polypeptide: Basic phospholipase A2 CTs-G6 (23 aa).

Ca(2+) serves as cofactor. Post-translationally, contains 7 disulfide bonds. As to expression, expressed by the venom gland.

The protein resides in the secreted. The catalysed reaction is a 1,2-diacyl-sn-glycero-3-phosphocholine + H2O = a 1-acyl-sn-glycero-3-phosphocholine + a fatty acid + H(+). Functionally, snake venom phospholipase A2 (PLA2) that induces local edema a few hours after injection (5-10 ug) in the hind paw. PLA2 catalyzes the calcium-dependent hydrolysis of the 2-acyl groups in 3-sn-phosphoglycerides. The polypeptide is Basic phospholipase A2 CTs-G6 (Trimeresurus stejnegeri (Chinese green tree viper)).